Here is a 248-residue protein sequence, read N- to C-terminus: ATP synthase subunit a, chloroplastic (248 aa).

5 helical membrane passes run 37 to 57, 96 to 116, 135 to 155, 200 to 220, and 221 to 241; these read AQVL…SIVA, VPFI…GALF, INTT…AGLH, LVVA…MMFL, and GLFT…AYIG.

Belongs to the ATPase A chain family. F-type ATPases have 2 components, CF(1) - the catalytic core - and CF(0) - the membrane proton channel. CF(1) has five subunits: alpha(3), beta(3), gamma(1), delta(1), epsilon(1). CF(0) has four main subunits: a, b, b' and c.

The protein resides in the plastid. Its subcellular location is the chloroplast thylakoid membrane. Functionally, key component of the proton channel; it plays a direct role in the translocation of protons across the membrane. The sequence is that of ATP synthase subunit a, chloroplastic from Angiopteris evecta (Mule's foot fern).